The sequence spans 431 residues: Histidinol dehydrogenase 1 (431 aa).

Residues Tyr-127, Gln-188, and Asn-211 each contribute to the NAD(+) site. 3 residues coordinate substrate: Ser-234, Gln-256, and His-259. The Zn(2+) site is built by Gln-256 and His-259. Catalysis depends on proton acceptor residues Glu-324 and His-325. Residues His-325, Asp-358, Glu-412, and His-417 each contribute to the substrate site. Asp-358 contributes to the Zn(2+) binding site. Zn(2+) is bound at residue His-417.

The protein belongs to the histidinol dehydrogenase family. Zn(2+) serves as cofactor.

The catalysed reaction is L-histidinol + 2 NAD(+) + H2O = L-histidine + 2 NADH + 3 H(+). Its pathway is amino-acid biosynthesis; L-histidine biosynthesis; L-histidine from 5-phospho-alpha-D-ribose 1-diphosphate: step 9/9. Functionally, catalyzes the sequential NAD-dependent oxidations of L-histidinol to L-histidinaldehyde and then to L-histidine. This Trichormus variabilis (strain ATCC 29413 / PCC 7937) (Anabaena variabilis) protein is Histidinol dehydrogenase 1.